A 472-amino-acid polypeptide reads, in one-letter code: tRNA modification GTPase MnmE (472 aa).

(6S)-5-formyl-5,6,7,8-tetrahydrofolate contacts are provided by R28, E91, and K130. The region spanning 225–391 (GAKVVLAGKT…LSEKAYSVLA (167 aa)) is the TrmE-type G domain. Residue N235 coordinates K(+). GTP contacts are provided by residues 235-240 (NAGKSS), 254-260 (SDIHGTT), and 279-282 (DTAG). A Mg(2+)-binding site is contributed by S239. K(+)-binding residues include S254, I256, and T259. T260 serves as a coordination point for Mg(2+). K472 serves as a coordination point for (6S)-5-formyl-5,6,7,8-tetrahydrofolate.

The protein belongs to the TRAFAC class TrmE-Era-EngA-EngB-Septin-like GTPase superfamily. TrmE GTPase family. As to quaternary structure, homodimer. Heterotetramer of two MnmE and two MnmG subunits. It depends on K(+) as a cofactor.

It localises to the cytoplasm. Exhibits a very high intrinsic GTPase hydrolysis rate. Involved in the addition of a carboxymethylaminomethyl (cmnm) group at the wobble position (U34) of certain tRNAs, forming tRNA-cmnm(5)s(2)U34. The polypeptide is tRNA modification GTPase MnmE (Treponema denticola (strain ATCC 35405 / DSM 14222 / CIP 103919 / JCM 8153 / KCTC 15104)).